Consider the following 445-residue polypeptide: Argininosuccinate synthase (445 aa).

ATP is bound by residues 17 to 25 (AFSGGLDTS) and alanine 43. Tyrosine 99 serves as a coordination point for L-citrulline. Residues glycine 129 and threonine 131 each coordinate ATP. L-aspartate-binding residues include threonine 131, asparagine 135, and aspartate 136. Asparagine 135 contacts L-citrulline. Residue aspartate 136 coordinates ATP. Residues arginine 139 and serine 192 each coordinate L-citrulline. Aspartate 194 serves as a coordination point for ATP. L-citrulline is bound by residues threonine 201, glutamate 203, and glutamate 280.

The protein belongs to the argininosuccinate synthase family. Type 2 subfamily. In terms of assembly, homotetramer.

The protein resides in the cytoplasm. It catalyses the reaction L-citrulline + L-aspartate + ATP = 2-(N(omega)-L-arginino)succinate + AMP + diphosphate + H(+). It functions in the pathway amino-acid biosynthesis; L-arginine biosynthesis; L-arginine from L-ornithine and carbamoyl phosphate: step 2/3. This chain is Argininosuccinate synthase (argG), found in Ralstonia nicotianae (strain ATCC BAA-1114 / GMI1000) (Ralstonia solanacearum).